Reading from the N-terminus, the 366-residue chain is Anhydro-N-acetylmuramic acid kinase (366 aa).

10–17 (GTSMDGID) provides a ligand contact to ATP.

The protein belongs to the anhydro-N-acetylmuramic acid kinase family.

It catalyses the reaction 1,6-anhydro-N-acetyl-beta-muramate + ATP + H2O = N-acetyl-D-muramate 6-phosphate + ADP + H(+). Its pathway is amino-sugar metabolism; 1,6-anhydro-N-acetylmuramate degradation. It functions in the pathway cell wall biogenesis; peptidoglycan recycling. In terms of biological role, catalyzes the specific phosphorylation of 1,6-anhydro-N-acetylmuramic acid (anhMurNAc) with the simultaneous cleavage of the 1,6-anhydro ring, generating MurNAc-6-P. Is required for the utilization of anhMurNAc either imported from the medium or derived from its own cell wall murein, and thus plays a role in cell wall recycling. This Legionella pneumophila (strain Corby) protein is Anhydro-N-acetylmuramic acid kinase.